Here is a 292-residue protein sequence, read N- to C-terminus: Nucleotide-binding protein azo0399 (292 aa).

8–15 (GLSGSGKS) is a binding site for ATP. 57–60 (DMRS) contributes to the GTP binding site.

Belongs to the RapZ-like family.

In terms of biological role, displays ATPase and GTPase activities. The protein is Nucleotide-binding protein azo0399 of Azoarcus sp. (strain BH72).